Reading from the N-terminus, the 326-residue chain is Fructose-1,6-bisphosphatase class 1 (326 aa).

It belongs to the FBPase class 1 family. In terms of assembly, homotetramer.

The protein localises to the cytoplasm. The enzyme catalyses beta-D-fructose 1,6-bisphosphate + H2O = beta-D-fructose 6-phosphate + phosphate. It participates in carbohydrate biosynthesis; gluconeogenesis. This Methylobacterium sp. (strain 4-46) protein is Fructose-1,6-bisphosphatase class 1.